The following is a 594-amino-acid chain: Cytosolic Fe-S cluster assembly factor NAR1 (594 aa).

[4Fe-4S] cluster is bound by residues Cys20, Cys88, Cys91, Cys94, Cys209, and Cys264. The segment at 444-465 is disordered; it reads RRARMSKSEDSSGASASSMAPA. Positions 454–465 are enriched in low complexity; it reads SSGASASSMAPA. [4Fe-4S] cluster-binding residues include Cys481 and Cys485. Residues 492–511 are disordered; sequence IAAPAPTSTPPAAPAPAHAA.

It belongs to the NARF family.

Component of the cytosolic Fe/S protein assembly machinery. Required for maturation of extramitochondrial Fe/S proteins. May play a role in the transfer of pre-assembled Fe/S clusters to target apoproteins. In Lodderomyces elongisporus (strain ATCC 11503 / CBS 2605 / JCM 1781 / NBRC 1676 / NRRL YB-4239) (Yeast), this protein is Cytosolic Fe-S cluster assembly factor NAR1 (NAR1).